A 212-amino-acid chain; its full sequence is Noggin-2 (212 aa).

The N-terminal stretch at 1 to 23 is a signal peptide; sequence MGSITRALPLLLLLLLCAHGTAS. Residues 37–56 are disordered; the sequence is LPVPDLIENPDPEHDPREQD. A compositionally biased stretch (basic and acidic residues) spans 47-56; the sequence is DPEHDPREQD. Asn-84 is a glycosylation site (N-linked (GlcNAc...) asparagine).

The protein belongs to the noggin family. In terms of assembly, homodimer; disulfide-linked.

The protein resides in the secreted. In terms of biological role, inhibitor of bone morphogenetic proteins (BMP) signaling. This is Noggin-2 (nog2) from Danio rerio (Zebrafish).